Here is a 264-residue protein sequence, read N- to C-terminus: Small ribosomal subunit protein eS1 (264 aa).

The disordered stretch occupies residues 232 to 264 (HGEGGGAGKPSGDEAGTKVERADGYEPPVQESV). The span at 242-255 (SGDEAGTKVERADG) shows a compositional bias: basic and acidic residues.

Belongs to the eukaryotic ribosomal protein eS1 family. In terms of assembly, component of the small ribosomal subunit. Mature ribosomes consist of a small (40S) and a large (60S) subunit. The 40S subunit contains about 33 different proteins and 1 molecule of RNA (18S). The 60S subunit contains about 49 different proteins and 3 molecules of RNA (28S, 5.8S and 5S). Part of the small subunit (SSU) processome, composed of more than 70 proteins and the RNA chaperone small nucleolar RNA (snoRNA) U3.

Its subcellular location is the cytoplasm. The protein resides in the nucleus. It localises to the nucleolus. Functionally, component of the small ribosomal subunit. The ribosome is a large ribonucleoprotein complex responsible for the synthesis of proteins in the cell. Part of the small subunit (SSU) processome, first precursor of the small eukaryotic ribosomal subunit. During the assembly of the SSU processome in the nucleolus, many ribosome biogenesis factors, an RNA chaperone and ribosomal proteins associate with the nascent pre-rRNA and work in concert to generate RNA folding, modifications, rearrangements and cleavage as well as targeted degradation of pre-ribosomal RNA by the RNA exosome. May play a role during erythropoiesis. The chain is Small ribosomal subunit protein eS1 from Taeniopygia guttata (Zebra finch).